The following is a 233-amino-acid chain: Phosphonates import ATP-binding protein PhnC 1 (233 aa).

An ABC transporter domain is found at 2–227 (LSVSGLTKRY…PAAALDREDI (226 aa)). Residue 34–41 (GRSGAGKT) coordinates ATP.

Belongs to the ABC transporter superfamily. Phosphonates importer (TC 3.A.1.9.1) family. As to quaternary structure, the complex is composed of two ATP-binding proteins (PhnC), two transmembrane proteins (PhnE) and a solute-binding protein (PhnD).

Its subcellular location is the cell membrane. It carries out the reaction phosphonate(out) + ATP + H2O = phosphonate(in) + ADP + phosphate + H(+). Functionally, part of the ABC transporter complex PhnCDE involved in phosphonates import. Responsible for energy coupling to the transport system. This chain is Phosphonates import ATP-binding protein PhnC 1, found in Natronomonas pharaonis (strain ATCC 35678 / DSM 2160 / CIP 103997 / JCM 8858 / NBRC 14720 / NCIMB 2260 / Gabara) (Halobacterium pharaonis).